The sequence spans 493 residues: Glutamyl-tRNA(Gln) amidotransferase subunit A (493 aa).

Catalysis depends on charge relay system residues Lys79 and Ser159. Residue Ser183 is the Acyl-ester intermediate of the active site.

This sequence belongs to the amidase family. GatA subfamily. Heterotrimer of A, B and C subunits.

The catalysed reaction is L-glutamyl-tRNA(Gln) + L-glutamine + ATP + H2O = L-glutaminyl-tRNA(Gln) + L-glutamate + ADP + phosphate + H(+). Functionally, allows the formation of correctly charged Gln-tRNA(Gln) through the transamidation of misacylated Glu-tRNA(Gln) in organisms which lack glutaminyl-tRNA synthetase. The reaction takes place in the presence of glutamine and ATP through an activated gamma-phospho-Glu-tRNA(Gln). The chain is Glutamyl-tRNA(Gln) amidotransferase subunit A from Brucella suis (strain ATCC 23445 / NCTC 10510).